The chain runs to 293 residues: Cytidine deaminase (293 aa).

CMP/dCMP-type deaminase domains lie at 47–166 (DDRA…FGPA) and 186–293 (VSDD…YQAV). 88–90 (NME) contacts substrate. H101 contributes to the Zn(2+) binding site. E103 (proton donor) is an active-site residue. The Zn(2+) site is built by C128 and C131.

It belongs to the cytidine and deoxycytidylate deaminase family. As to quaternary structure, homodimer. It depends on Zn(2+) as a cofactor.

The enzyme catalyses cytidine + H2O + H(+) = uridine + NH4(+). The catalysed reaction is 2'-deoxycytidine + H2O + H(+) = 2'-deoxyuridine + NH4(+). Its function is as follows. This enzyme scavenges exogenous and endogenous cytidine and 2'-deoxycytidine for UMP synthesis. This Aeromonas hydrophila subsp. hydrophila (strain ATCC 7966 / DSM 30187 / BCRC 13018 / CCUG 14551 / JCM 1027 / KCTC 2358 / NCIMB 9240 / NCTC 8049) protein is Cytidine deaminase.